The primary structure comprises 529 residues: Peptide chain release factor 3 (529 aa).

One can recognise a tr-type G domain in the interval 11–280 (AARRTFAIIS…GLVAWAPPPM (270 aa)). Residues 20–27 (SHPDAGKT), 88–92 (DTPGH), and 142–145 (NKVD) each bind GTP.

The protein belongs to the TRAFAC class translation factor GTPase superfamily. Classic translation factor GTPase family. PrfC subfamily.

Its subcellular location is the cytoplasm. In terms of biological role, increases the formation of ribosomal termination complexes and stimulates activities of RF-1 and RF-2. It binds guanine nucleotides and has strong preference for UGA stop codons. It may interact directly with the ribosome. The stimulation of RF-1 and RF-2 is significantly reduced by GTP and GDP, but not by GMP. This chain is Peptide chain release factor 3, found in Sodalis glossinidius (strain morsitans).